The following is a 29-amino-acid chain: Cytochrome b6-f complex subunit 8 (29 aa).

Residues 3–23 form a helical membrane-spanning segment; that stretch reads ITSIAWGALMVVFTFSLSLVV.

Belongs to the PetN family. In terms of assembly, the 4 large subunits of the cytochrome b6-f complex are cytochrome b6, subunit IV (17 kDa polypeptide, PetD), cytochrome f and the Rieske protein, while the 4 small subunits are PetG, PetL, PetM and PetN. The complex functions as a dimer.

Its subcellular location is the plastid membrane. Component of the cytochrome b6-f complex, which mediates electron transfer between photosystem II (PSII) and photosystem I (PSI), cyclic electron flow around PSI, and state transitions. This chain is Cytochrome b6-f complex subunit 8, found in Aneura mirabilis (Parasitic liverwort).